The primary structure comprises 807 residues: DNA gyrase subunit B (807 aa).

In terms of domain architecture, Toprim spans 429–543 (SELFIVEGDS…KGYLYIAQPP (115 aa)). Positions 435, 508, and 510 each coordinate Mg(2+).

It belongs to the type II topoisomerase GyrB family. Heterotetramer, composed of two GyrA and two GyrB chains. In the heterotetramer, GyrA contains the active site tyrosine that forms a transient covalent intermediate with DNA, while GyrB binds cofactors and catalyzes ATP hydrolysis. Mg(2+) serves as cofactor. It depends on Mn(2+) as a cofactor. Ca(2+) is required as a cofactor.

It is found in the cytoplasm. It carries out the reaction ATP-dependent breakage, passage and rejoining of double-stranded DNA.. Its function is as follows. A type II topoisomerase that negatively supercoils closed circular double-stranded (ds) DNA in an ATP-dependent manner to modulate DNA topology and maintain chromosomes in an underwound state. Negative supercoiling favors strand separation, and DNA replication, transcription, recombination and repair, all of which involve strand separation. Also able to catalyze the interconversion of other topological isomers of dsDNA rings, including catenanes and knotted rings. Type II topoisomerases break and join 2 DNA strands simultaneously in an ATP-dependent manner. The protein is DNA gyrase subunit B of Rickettsia typhi (strain ATCC VR-144 / Wilmington).